Reading from the N-terminus, the 332-residue chain is Adenosine receptor A2b (332 aa).

The Extracellular segment spans residues 1 to 8; that stretch reads MQLETQDA. Residues 9–33 traverse the membrane as a helical segment; that stretch reads LYVALELAIAALSVAGNVLVCAAVG. Over 34 to 43 the chain is Cytoplasmic; the sequence is TSSALQTPTN. A helical membrane pass occupies residues 44-67; sequence YFLVSLAAADVAVGLFAIPFAITI. Over 68 to 78 the chain is Extracellular; it reads SLGFCTDFHSC. Residues Cys-78 and Cys-170 are joined by a disulfide bond. The chain crosses the membrane as a helical span at residues 79–101; that stretch reads LFLACFVLVLTQSSIFSLLAVAV. The Cytoplasmic portion of the chain corresponds to 102-121; sequence DRYLAIRVPLRYKSLVTGTR. A helical transmembrane segment spans residues 122–144; it reads ARGVIAVLWVLAFGIGLTPFLGW. The Extracellular segment spans residues 145–177; it reads NSKDSATNCTEPWDGTTNESCCLVKCLFENVVP. N-linked (GlcNAc...) asparagine glycosylation is found at Asn-152 and Asn-162. Glu-173 serves as a coordination point for adenosine. Residues 178–202 traverse the membrane as a helical segment; sequence MSYMVYFNFFGCVLPPLLIMLVIYI. Residues 203–234 lie on the Cytoplasmic side of the membrane; the sequence is KIFMVACKQLQRTELVDHSRTVIQREIHAAKS. A helical transmembrane segment spans residues 235-258; sequence LAMIVGIFALCWLPVHAINCVTLF. Asn-253 contributes to the adenosine binding site. The Extracellular segment spans residues 259–266; sequence QPARAKDK. A helical membrane pass occupies residues 267 to 290; that stretch reads PKWAMNMAILLSHASSVVNPIVYA. Adenosine contacts are provided by Ser-278 and His-279. The Cytoplasmic segment spans residues 291-332; sequence YRNRDFRYTFHKIISRYVLCQTDVLKSGNGQAGTQSALDVGL. Cys-310 carries S-palmitoyl cysteine lipidation.

The protein belongs to the G-protein coupled receptor 1 family.

Its subcellular location is the cell membrane. Functionally, receptor for adenosine. The activity of this receptor is mediated by G proteins which activate adenylyl cyclase. The protein is Adenosine receptor A2b (ADORA2B) of Canis lupus familiaris (Dog).